A 579-amino-acid chain; its full sequence is uncharacterized protein (579 aa).

11 helical membrane-spanning segments follow: residues 13-35 (DLIK…IPWI), 39-61 (SISR…LLLN), 66-83 (ANGL…AFYF), 93-110 (AYWG…TYPL), 130-152 (LAIV…IEYL), 162-181 (IVPK…FFLI), 201-223 (LIVN…LYLA), 238-257 (YIIM…RLLL), 264-286 (GFYR…GIHT), 296-315 (IRVM…LFSM), and 324-346 (LFSL…YYLA).

It is found in the cell membrane. This is an uncharacterized protein from Pasteurella multocida (strain Pm70).